The sequence spans 94 residues: Defensin-7 (94 aa).

Residues 1-19 (MRTLTLLSAFLLVALQAWA) form the signal peptide. Intrachain disulfides connect C65–C93 and C72–C92.

It belongs to the alpha-defensin family.

It is found in the secreted. Its function is as follows. Has antimicrobial activity. In Pan troglodytes (Chimpanzee), this protein is Defensin-7 (DEFA7).